The primary structure comprises 409 residues: Argininosuccinate synthase (409 aa).

ATP-binding positions include 11–19 (AYSGGLDTS) and A38. Residues Y91 and S96 each coordinate L-citrulline. Residue G121 coordinates ATP. L-aspartate is bound by residues T123, N127, and D128. Residue N127 participates in L-citrulline binding. Positions 131, 182, 191, 267, and 279 each coordinate L-citrulline.

It belongs to the argininosuccinate synthase family. Type 1 subfamily. Homotetramer.

It is found in the cytoplasm. The catalysed reaction is L-citrulline + L-aspartate + ATP = 2-(N(omega)-L-arginino)succinate + AMP + diphosphate + H(+). The protein operates within amino-acid biosynthesis; L-arginine biosynthesis; L-arginine from L-ornithine and carbamoyl phosphate: step 2/3. This chain is Argininosuccinate synthase, found in Nitrobacter hamburgensis (strain DSM 10229 / NCIMB 13809 / X14).